The primary structure comprises 493 residues: Probable glycine dehydrogenase (decarboxylating) subunit 2 (493 aa).

Lys269 bears the N6-(pyridoxal phosphate)lysine mark.

The protein belongs to the GcvP family. C-terminal subunit subfamily. As to quaternary structure, the glycine cleavage system is composed of four proteins: P, T, L and H. In this organism, the P 'protein' is a heterodimer of two subunits. It depends on pyridoxal 5'-phosphate as a cofactor.

It catalyses the reaction N(6)-[(R)-lipoyl]-L-lysyl-[glycine-cleavage complex H protein] + glycine + H(+) = N(6)-[(R)-S(8)-aminomethyldihydrolipoyl]-L-lysyl-[glycine-cleavage complex H protein] + CO2. The glycine cleavage system catalyzes the degradation of glycine. The P protein binds the alpha-amino group of glycine through its pyridoxal phosphate cofactor; CO(2) is released and the remaining methylamine moiety is then transferred to the lipoamide cofactor of the H protein. This is Probable glycine dehydrogenase (decarboxylating) subunit 2 from Chloroherpeton thalassium (strain ATCC 35110 / GB-78).